The primary structure comprises 75 residues: uncharacterized protein (75 aa).

An N-terminal signal peptide occupies residues 1-21 (MRLIVVSIMVTLLSGCGSIIS).

This sequence to E.coli YidQ.

This is an uncharacterized protein from Escherichia coli O157:H7.